We begin with the raw amino-acid sequence, 722 residues long: Glycine--tRNA ligase beta subunit (722 aa).

The protein belongs to the class-II aminoacyl-tRNA synthetase family. In terms of assembly, tetramer of two alpha and two beta subunits.

It is found in the cytoplasm. The catalysed reaction is tRNA(Gly) + glycine + ATP = glycyl-tRNA(Gly) + AMP + diphosphate. This Xylella fastidiosa (strain M12) protein is Glycine--tRNA ligase beta subunit.